Reading from the N-terminus, the 707-residue chain is GDNF-inducible zinc finger protein 1 (707 aa).

The BTB domain occupies 31 to 103 (CDVTVIVDYQ…VYTARVRVKE (73 aa)). Polar residues predominate over residues 149-165 (VEASSGPQVSVTPSSKA). 2 disordered regions span residues 149 to 221 (VEAS…PKIR) and 243 to 309 (RRLR…KDGE). Composition is skewed to basic and acidic residues over residues 198–213 (PSKK…KDVA), 243–278 (RRLR…EPAS), and 287–298 (VEREESLQKVEG). 10 consecutive C2H2-type zinc fingers follow at residues 316–338 (FQCT…IKYH), 347–370 (YRCD…RHVH), 376–399 (FPCE…LQVH), 406–428 (HRCG…ERTH), 434–456 (YGCT…LRVH), 462–484 (FVCD…KRCH), 490–512 (FMCE…NRIH), 518–540 (FKCE…IKVH), 546–568 (YCCD…HRIH), and 574–596 (YMCN…TSIH). A Phosphoserine modification is found at Ser-612.

The protein belongs to the krueppel C2H2-type zinc-finger protein family. In terms of assembly, interacts with NCL.

Its subcellular location is the cytoplasm. It is found in the nucleus. It localises to the nucleoplasm. The protein resides in the nucleolus. In terms of biological role, transcriptional repressor that binds the GZF1 responsive element (GRE) (consensus: 5'-TGCGCN[TG][CA]TATA-3'). May be regulating VSX2/HOX10 expression. The chain is GDNF-inducible zinc finger protein 1 (Gzf1) from Rattus norvegicus (Rat).